A 208-amino-acid polypeptide reads, in one-letter code: MATVLFVKANNRPAEQAVSVKLYEAFLANYKEANPNDTVVELDLYKEELPYVGVDMINGTFKVGKGFDLTEEEAKAVAVADKYLNQFLEADKVVFGFPLWNLTIPAVLHTYIDYLNRAGKTFKYTPEGPVGLIGDKKIALLNARGGVYSEGPAAEVEMAVKYVASMMGFFGATNMETVVIEGHNQFPDKAEEIIAAGLEEAAKVASKF.

The protein belongs to the azoreductase type 1 family. As to quaternary structure, homodimer. It depends on FMN as a cofactor.

It catalyses the reaction 2 a quinone + NADH + H(+) = 2 a 1,4-benzosemiquinone + NAD(+). The catalysed reaction is N,N-dimethyl-1,4-phenylenediamine + anthranilate + 2 NAD(+) = 2-(4-dimethylaminophenyl)diazenylbenzoate + 2 NADH + 2 H(+). In terms of biological role, quinone reductase that provides resistance to thiol-specific stress caused by electrophilic quinones. Also exhibits azoreductase activity. Catalyzes the reductive cleavage of the azo bond in aromatic azo compounds to the corresponding amines. The protein is FMN-dependent NADH:quinone oxidoreductase 3 of Bacillus cereus (strain ATCC 14579 / DSM 31 / CCUG 7414 / JCM 2152 / NBRC 15305 / NCIMB 9373 / NCTC 2599 / NRRL B-3711).